A 341-amino-acid polypeptide reads, in one-letter code: Ketol-acid reductoisomerase (NADP(+)) (341 aa).

The region spanning 2 to 181 (AKVYYNGDAN…GAARAGVLET (180 aa)) is the KARI N-terminal Rossmann domain. NADP(+)-binding positions include 25 to 28 (YGSQ), Arg-48, Ser-52, and 82 to 85 (DEKQ). His-107 is a catalytic residue. Residue Gly-133 participates in NADP(+) binding. One can recognise a KARI C-terminal knotted domain in the interval 182 to 327 (TFKEETETDL…RELRSMMPFV (146 aa)). Residues Asp-190, Glu-194, Glu-226, and Glu-230 each coordinate Mg(2+). Ser-251 is a binding site for substrate.

The protein belongs to the ketol-acid reductoisomerase family. Mg(2+) is required as a cofactor.

It carries out the reaction (2R)-2,3-dihydroxy-3-methylbutanoate + NADP(+) = (2S)-2-acetolactate + NADPH + H(+). The enzyme catalyses (2R,3R)-2,3-dihydroxy-3-methylpentanoate + NADP(+) = (S)-2-ethyl-2-hydroxy-3-oxobutanoate + NADPH + H(+). Its pathway is amino-acid biosynthesis; L-isoleucine biosynthesis; L-isoleucine from 2-oxobutanoate: step 2/4. The protein operates within amino-acid biosynthesis; L-valine biosynthesis; L-valine from pyruvate: step 2/4. Involved in the biosynthesis of branched-chain amino acids (BCAA). Catalyzes an alkyl-migration followed by a ketol-acid reduction of (S)-2-acetolactate (S2AL) to yield (R)-2,3-dihydroxy-isovalerate. In the isomerase reaction, S2AL is rearranged via a Mg-dependent methyl migration to produce 3-hydroxy-3-methyl-2-ketobutyrate (HMKB). In the reductase reaction, this 2-ketoacid undergoes a metal-dependent reduction by NADPH to yield (R)-2,3-dihydroxy-isovalerate. This chain is Ketol-acid reductoisomerase (NADP(+)), found in Geobacillus kaustophilus (strain HTA426).